The chain runs to 390 residues: LIM/homeobox protein Lhx4 (390 aa).

LIM zinc-binding domains follow at residues 28 to 87 (PQCA…RFGT) and 88 to 150 (KCTA…AKQN). A DNA-binding region (homeobox) is located at residues 157–216 (AKRPRTTITAKQLETLKNAYKNSPKPARHVREQLSSETGLDMRVVQVWFQNRRAKEKRLK). The segment at 161 to 181 (RTTITAKQLETLKNAYKNSPK) is interaction with DNA. Residues 199 to 211 (RVVQVWFQNRRAK) form an interaction with 5-mCpG DNA region. Disordered regions lie at residues 230 to 253 (SVKR…GVSD) and 356 to 390 (AGGP…HPPF).

It localises to the nucleus. May play a critical role in the development of respiratory control mechanisms and in the normal growth and maturation of the lung. Binds preferentially to methylated DNA. The protein is LIM/homeobox protein Lhx4 (LHX4) of Homo sapiens (Human).